The following is a 318-amino-acid chain: Aspartate carbamoyltransferase catalytic subunit (318 aa).

Carbamoyl phosphate is bound by residues Arg-57 and Thr-58. Lys-85 contacts L-aspartate. Residues Arg-107, His-141, and Gln-144 each contribute to the carbamoyl phosphate site. L-aspartate-binding residues include Arg-174 and Arg-228. Carbamoyl phosphate is bound by residues Gly-269 and Pro-270.

The protein belongs to the aspartate/ornithine carbamoyltransferase superfamily. ATCase family. Heterododecamer (2C3:3R2) of six catalytic PyrB chains organized as two trimers (C3), and six regulatory PyrI chains organized as three dimers (R2).

It carries out the reaction carbamoyl phosphate + L-aspartate = N-carbamoyl-L-aspartate + phosphate + H(+). The protein operates within pyrimidine metabolism; UMP biosynthesis via de novo pathway; (S)-dihydroorotate from bicarbonate: step 2/3. Its function is as follows. Catalyzes the condensation of carbamoyl phosphate and aspartate to form carbamoyl aspartate and inorganic phosphate, the committed step in the de novo pyrimidine nucleotide biosynthesis pathway. In Mycolicibacterium smegmatis (strain ATCC 700084 / mc(2)155) (Mycobacterium smegmatis), this protein is Aspartate carbamoyltransferase catalytic subunit.